We begin with the raw amino-acid sequence, 702 residues long: MLHVKRTLVTTALPYANGPVHLGHLAGVYLPADLYVRYKRLKGDNIIHIGGSDEHGVPITLTAEKEGISPRDVVDRYHGMNLDAFTKCGISFNYYGRTTSAVHHATAREFFSEIENKGMFTRKTEKQFFDKKANRFLSDRYITGTCPICSNPDANGDQCEQCGTHLSPLELINPKSKLSDATPELRETLHWYFPLGRFQSELESYVQSHDKEWRPNVINYTRTWLKQGLNDRAITRDLSWGIKLPLETPEASGKVLYVWFDAVLGYISFTKEWAAQSGQPELWREYWQDPECRMINFIGKDNVVFHTLMFPAILMAWNKGRKTDLYNLADNVPASEFMNFEGRKFSKSRNYAVYLGDFLEKFPADTLRYCIAMNYPENKDSDFSWLDFQNRTNGELADTLGNFIKRSIDFTNSRFDGKVPCECTPEEWKIPGIDWKETLEKLDQAFEAFHFREATSLGMDIARTANRFLTESEPWKVIKSDREGAAKTMAISLNLCYALALVLYPVIPETANRILAMLGVEKSIDDQLDSGKSCIAQILTPQLEKGHQLRKHSEILFTKIEDAELAPELKKIEDLLALTEEREAKNEAKAMDFSPLISFDEFLKVDLRVATVLDCQKIKKAGKLLKLQLKVGSETRQVLAGIAKHYSPEEMIGKNVILVANLAERTILNEISQGMILAVEGTDGKLFLVEPSGKEINGKKIQ.

Residues 14–24 (PYANGPVHLGH) carry the 'HIGH' region motif. C146, C149, C159, and C162 together coordinate Zn(2+). The 'KMSKS' region motif lies at 344–348 (KFSKS). K347 is a binding site for ATP. Positions 601–702 (EFLKVDLRVA…GKEINGKKIQ (102 aa)) constitute a tRNA-binding domain.

Belongs to the class-I aminoacyl-tRNA synthetase family. MetG type 1 subfamily. Homodimer. Zn(2+) serves as cofactor.

The protein localises to the cytoplasm. The enzyme catalyses tRNA(Met) + L-methionine + ATP = L-methionyl-tRNA(Met) + AMP + diphosphate. Functionally, is required not only for elongation of protein synthesis but also for the initiation of all mRNA translation through initiator tRNA(fMet) aminoacylation. In Chlorobium phaeobacteroides (strain DSM 266 / SMG 266 / 2430), this protein is Methionine--tRNA ligase.